The sequence spans 278 residues: Orotidine 5'-phosphate decarboxylase (278 aa).

Substrate is bound by residues Asp-40, 65 to 67 (KTH), 96 to 105 (DRKFIDIGNT), Tyr-230, and Arg-248. Lys-98 functions as the Proton donor in the catalytic mechanism.

This sequence belongs to the OMP decarboxylase family.

It catalyses the reaction orotidine 5'-phosphate + H(+) = UMP + CO2. It functions in the pathway pyrimidine metabolism; UMP biosynthesis via de novo pathway; UMP from orotate: step 2/2. In Penicillium chrysogenum (Penicillium notatum), this protein is Orotidine 5'-phosphate decarboxylase (pyrG).